Consider the following 146-residue polypeptide: Small ribosomal subunit protein uS15 (146 aa).

This sequence belongs to the universal ribosomal protein uS15 family. Part of the 30S ribosomal subunit.

The protein is Small ribosomal subunit protein uS15 of Picrophilus torridus (strain ATCC 700027 / DSM 9790 / JCM 10055 / NBRC 100828 / KAW 2/3).